A 124-amino-acid chain; its full sequence is MAWTLLLLVLLSHCTGSLSQPVLTQPSSHSASSGASVRLTCMLSSGFSVGDFWIRWYQQKPGNPPRYLLYYHSDSNKGQGSGVPSRFSGSNDASANAGILRISGLQPEDEADYYCGTWHSNSKT.

Positions Met1–Ser19 are cleaved as a signal peptide. Residues Gln20–Ser44 are framework-1. The region spanning Pro21–Thr124 is the Ig-like domain. The cysteines at positions 41 and 115 are disulfide-linked. Positions Ser45 to Trp53 are complementarity-determining-1. The framework-2 stretch occupies residues Ile54–Tyr70. Positions Tyr71–Lys77 are complementarity-determining-2. The interval Gly78–Cys115 is framework-3. The interval Gly116 to Thr124 is complementarity-determining-3.

Immunoglobulins are composed of two identical heavy chains and two identical light chains; disulfide-linked.

The protein localises to the secreted. It localises to the cell membrane. In terms of biological role, v region of the variable domain of immunoglobulin light chains that participates in the antigen recognition. Immunoglobulins, also known as antibodies, are membrane-bound or secreted glycoproteins produced by B lymphocytes. In the recognition phase of humoral immunity, the membrane-bound immunoglobulins serve as receptors which, upon binding of a specific antigen, trigger the clonal expansion and differentiation of B lymphocytes into immunoglobulins-secreting plasma cells. Secreted immunoglobulins mediate the effector phase of humoral immunity, which results in the elimination of bound antigens. The antigen binding site is formed by the variable domain of one heavy chain, together with that of its associated light chain. Thus, each immunoglobulin has two antigen binding sites with remarkable affinity for a particular antigen. The variable domains are assembled by a process called V-(D)-J rearrangement and can then be subjected to somatic hypermutations which, after exposure to antigen and selection, allow affinity maturation for a particular antigen. This chain is Immunoglobulin lambda variable 5-52, found in Homo sapiens (Human).